The chain runs to 555 residues: MKSDIQIARDIELQRIEQIAESIDLPVEQLEPYGRYTAKVPLSCIDEEKVKKGNLILVTAITPNKAGVGKTTVSIGLALGLNHIGKKAIVALREPSLGPCFGMKGGAAGGGYAQVLPMENINLHFTGDFHAVTSAHNMITALLENYIYQNRNTCDGLSEILWKRVLDVNDRSLRNAVTGLGTISDGIPRQTGFDITPASEIMAILCLAKDFEDLRSRLENILLGYTKEGAPFTVKDLGIAGSIAVLLKDAIKPNLVQTTEHTPAFVHGGPFANIAHGCNSILATKMALSFGEYAVTEAGFGADLGAEKFLDIKCREMGVAPKLTVLVATLRALKLHGGVAETEIKAPNAEALRRGLSNLDRHIYNLKKFGQQVIVAFNRFDTDEEEEISIVREHCIGQNVGFAVNNAFAEGGKGAEELAKLVVEMVENKPSQPLKYAYEPENPVKMKIEKIAKEIYSAGSVVYSSKADGKLKKIAMQSLDHLPVCIAKTQYSFSSDPKAKGDVRGFELKVSDIIINRGAGMLVVIIGEIMRMPGLPKEPQAVHIDIVDGFIEGLS.

This sequence belongs to the formate--tetrahydrofolate ligase family.

The enzyme catalyses (6S)-5,6,7,8-tetrahydrofolate + formate + ATP = (6R)-10-formyltetrahydrofolate + ADP + phosphate. It participates in one-carbon metabolism; tetrahydrofolate interconversion. In Porphyromonas gingivalis (strain ATCC BAA-308 / W83), this protein is Formate--tetrahydrofolate ligase.